A 100-amino-acid polypeptide reads, in one-letter code: Aspartyl/glutamyl-tRNA(Asn/Gln) amidotransferase subunit C (100 aa).

Belongs to the GatC family. As to quaternary structure, heterotrimer of A, B and C subunits.

The enzyme catalyses L-glutamyl-tRNA(Gln) + L-glutamine + ATP + H2O = L-glutaminyl-tRNA(Gln) + L-glutamate + ADP + phosphate + H(+). It carries out the reaction L-aspartyl-tRNA(Asn) + L-glutamine + ATP + H2O = L-asparaginyl-tRNA(Asn) + L-glutamate + ADP + phosphate + 2 H(+). Its function is as follows. Allows the formation of correctly charged Asn-tRNA(Asn) or Gln-tRNA(Gln) through the transamidation of misacylated Asp-tRNA(Asn) or Glu-tRNA(Gln) in organisms which lack either or both of asparaginyl-tRNA or glutaminyl-tRNA synthetases. The reaction takes place in the presence of glutamine and ATP through an activated phospho-Asp-tRNA(Asn) or phospho-Glu-tRNA(Gln). This chain is Aspartyl/glutamyl-tRNA(Asn/Gln) amidotransferase subunit C, found in Streptococcus equi subsp. zooepidemicus (strain MGCS10565).